Consider the following 647-residue polypeptide: DNA ligase (647 aa).

Residues 30-34 (DEEYD), 79-80 (SM), and Glu-105 contribute to the NAD(+) site. Lys-107 acts as the N6-AMP-lysine intermediate in catalysis. NAD(+)-binding residues include Arg-128, Glu-162, and Lys-301. Residues Cys-395, Cys-398, Cys-411, and Cys-416 each coordinate Zn(2+). The 78-residue stretch at 570 to 647 (KSDGVIFGKT…ESAFNELVKE (78 aa)) folds into the BRCT domain.

The protein belongs to the NAD-dependent DNA ligase family. LigA subfamily. The cofactor is Mg(2+). It depends on Mn(2+) as a cofactor.

The catalysed reaction is NAD(+) + (deoxyribonucleotide)n-3'-hydroxyl + 5'-phospho-(deoxyribonucleotide)m = (deoxyribonucleotide)n+m + AMP + beta-nicotinamide D-nucleotide.. DNA ligase that catalyzes the formation of phosphodiester linkages between 5'-phosphoryl and 3'-hydroxyl groups in double-stranded DNA using NAD as a coenzyme and as the energy source for the reaction. It is essential for DNA replication and repair of damaged DNA. In Campylobacter jejuni subsp. jejuni serotype O:6 (strain 81116 / NCTC 11828), this protein is DNA ligase.